Reading from the N-terminus, the 779-residue chain is Pleckstrin homology domain-containing family A member 4 (779 aa).

Residues 54–153 form the PH domain; that stretch reads PVHIRGWLHK…WLRALGRASR (100 aa). Disordered regions lie at residues 152 to 352, 492 to 670, and 691 to 764; these read SRAE…LPGP, AGLG…EGHR, and MTGG…LPQD. Ser-164 is subject to Phosphoserine. Positions 184–193 are enriched in basic and acidic residues; sequence SRGEEGRISE. The span at 315–332 shows a compositional bias: polar residues; the sequence is QHWSQEPRTQAHSGSPTY. The segment covering 525 to 535 has biased composition (low complexity); sequence PESLELSSPRS. The segment covering 536 to 551 has biased composition (basic and acidic residues); the sequence is PETDWGRPPGGDKDLA. At Ser-559 the chain carries Phosphoserine. Over residues 594–603 the composition is skewed to basic and acidic residues; it reads QLERMRRNQE. The span at 647–663 shows a compositional bias: polar residues; that stretch reads LRSSGSWSSPRNTTPYL. Residues 704–724 show a composition bias toward pro residues; that stretch reads PGVPLPPSDPTRQETPPPRSP.

In terms of tissue distribution, highly expressed in melanoma. Detected at low levels in heart, skeletal muscle, kidney, liver and small intestine.

It is found in the cytoplasm. The protein resides in the membrane. Its function is as follows. Binds specifically to phosphatidylinositol 3-phosphate (PtdIns3P), but not to other phosphoinositides. In Homo sapiens (Human), this protein is Pleckstrin homology domain-containing family A member 4 (PLEKHA4).